Here is a 191-residue protein sequence, read N- to C-terminus: Imidazoleglycerol-phosphate dehydratase (191 aa).

The protein belongs to the imidazoleglycerol-phosphate dehydratase family.

It is found in the cytoplasm. It catalyses the reaction D-erythro-1-(imidazol-4-yl)glycerol 3-phosphate = 3-(imidazol-4-yl)-2-oxopropyl phosphate + H2O. Its pathway is amino-acid biosynthesis; L-histidine biosynthesis; L-histidine from 5-phospho-alpha-D-ribose 1-diphosphate: step 6/9. The polypeptide is Imidazoleglycerol-phosphate dehydratase (Methanococcoides burtonii (strain DSM 6242 / NBRC 107633 / OCM 468 / ACE-M)).